We begin with the raw amino-acid sequence, 136 residues long: Peptide methionine sulfoxide reductase B5 (136 aa).

The MsrB domain maps to 14–135 (DEEWRAVLSP…NSVSIKFTPA (122 aa)). The Zn(2+) site is built by C53, C56, C99, and C102. A disulfide bridge links C71 with C124. Catalysis depends on C124, which acts as the Nucleophile.

This sequence belongs to the MsrB Met sulfoxide reductase family. Zn(2+) serves as cofactor.

The protein localises to the cytoplasm. The protein resides in the cytosol. The catalysed reaction is L-methionyl-[protein] + [thioredoxin]-disulfide + H2O = L-methionyl-(R)-S-oxide-[protein] + [thioredoxin]-dithiol. In terms of biological role, catalyzes the reduction of methionine sulfoxide (MetSO) to methionine in proteins. Plays a protective role against oxidative stress by restoring activity to proteins that have been inactivated by methionine oxidation. MSRB family specifically reduces the MetSO R-enantiomer. In Oryza sativa subsp. japonica (Rice), this protein is Peptide methionine sulfoxide reductase B5 (MSRB5).